The primary structure comprises 503 residues: Glutamate--tRNA ligase (503 aa).

The 'HIGH' region motif lies at 9–19; that stretch reads PSPTGDPHVGT. A 'KMSKS' region motif is present at residues 251-255; that stretch reads KLSKR. Lysine 254 is an ATP binding site.

This sequence belongs to the class-I aminoacyl-tRNA synthetase family. Glutamate--tRNA ligase type 1 subfamily. In terms of assembly, monomer.

Its subcellular location is the cytoplasm. It catalyses the reaction tRNA(Glu) + L-glutamate + ATP = L-glutamyl-tRNA(Glu) + AMP + diphosphate. In terms of biological role, catalyzes the attachment of glutamate to tRNA(Glu) in a two-step reaction: glutamate is first activated by ATP to form Glu-AMP and then transferred to the acceptor end of tRNA(Glu). This Saccharophagus degradans (strain 2-40 / ATCC 43961 / DSM 17024) protein is Glutamate--tRNA ligase.